Consider the following 325-residue polypeptide: Acetyl-coenzyme A carboxylase carboxyl transferase subunit alpha (325 aa).

Positions 38 to 292 (KLEKRLHALE…DQVLEKSLKQ (255 aa)) constitute a CoA carboxyltransferase C-terminal domain.

This sequence belongs to the AccA family. In terms of assembly, acetyl-CoA carboxylase is a heterohexamer composed of biotin carboxyl carrier protein (AccB), biotin carboxylase (AccC) and two subunits each of ACCase subunit alpha (AccA) and ACCase subunit beta (AccD).

It is found in the cytoplasm. It catalyses the reaction N(6)-carboxybiotinyl-L-lysyl-[protein] + acetyl-CoA = N(6)-biotinyl-L-lysyl-[protein] + malonyl-CoA. It functions in the pathway lipid metabolism; malonyl-CoA biosynthesis; malonyl-CoA from acetyl-CoA: step 1/1. In terms of biological role, component of the acetyl coenzyme A carboxylase (ACC) complex. First, biotin carboxylase catalyzes the carboxylation of biotin on its carrier protein (BCCP) and then the CO(2) group is transferred by the carboxyltransferase to acetyl-CoA to form malonyl-CoA. The chain is Acetyl-coenzyme A carboxylase carboxyl transferase subunit alpha from Halalkalibacterium halodurans (strain ATCC BAA-125 / DSM 18197 / FERM 7344 / JCM 9153 / C-125) (Bacillus halodurans).